The following is a 129-amino-acid chain: Fluoride-specific ion channel FluC (129 aa).

Helical transmembrane passes span 4-24 (LFVA…SGLI), 32-52 (FPWG…AFAT), 69-89 (FFMV…LQTL), and 105-125 (VLSV…AVLI). G76 and T79 together coordinate Na(+).

This sequence belongs to the fluoride channel Fluc/FEX (TC 1.A.43) family.

Its subcellular location is the cell inner membrane. The catalysed reaction is fluoride(in) = fluoride(out). Na(+) is not transported, but it plays an essential structural role and its presence is essential for fluoride channel function. Functionally, fluoride-specific ion channel. Important for reducing fluoride concentration in the cell, thus reducing its toxicity. The chain is Fluoride-specific ion channel FluC from Rhodospirillum rubrum (strain ATCC 11170 / ATH 1.1.1 / DSM 467 / LMG 4362 / NCIMB 8255 / S1).